The chain runs to 90 residues: Phosphocarrier protein NPr (90 aa).

An HPr domain is found at 2–90 (TVKQTVEITN…ALFNSGFDED (89 aa)). The active-site Pros-phosphohistidine intermediate is the H16.

Belongs to the HPr family.

The protein localises to the cytoplasm. Functionally, component of the phosphoenolpyruvate-dependent nitrogen-metabolic phosphotransferase system (nitrogen-metabolic PTS), that seems to be involved in regulating nitrogen metabolism. The phosphoryl group from phosphoenolpyruvate (PEP) is transferred to the phosphoryl carrier protein NPr by enzyme I-Ntr. Phospho-NPr then transfers it to EIIA-Ntr. Could function in the transcriptional regulation of sigma-54 dependent operons in conjunction with the NPr (PtsO) and EIIA-Ntr (PtsN) proteins. The polypeptide is Phosphocarrier protein NPr (ptsO) (Escherichia coli O157:H7).